Here is a 289-residue protein sequence, read N- to C-terminus: NAD(P)H-hydrate epimerase (289 aa).

The region spanning 71–277 (AQTIDNELMS…SIVEKYNLKV (207 aa)) is the YjeF N-terminal domain. 122-126 (NNGGD) provides a ligand contact to (6S)-NADPHX. Residues asparagine 123 and aspartate 185 each contribute to the K(+) site. Residues 189-195 (GFSFTGE) and aspartate 218 each bind (6S)-NADPHX. Serine 221 serves as a coordination point for K(+).

This sequence belongs to the NnrE/AIBP family. K(+) serves as cofactor.

It catalyses the reaction (6R)-NADHX = (6S)-NADHX. It carries out the reaction (6R)-NADPHX = (6S)-NADPHX. Catalyzes the epimerization of the S- and R-forms of NAD(P)HX, a damaged form of NAD(P)H that is a result of enzymatic or heat-dependent hydration. This is a prerequisite for the S-specific NAD(P)H-hydrate dehydratase to allow the repair of both epimers of NAD(P)HX. This is NAD(P)H-hydrate epimerase from Plasmodium vivax (strain Salvador I).